An 87-amino-acid polypeptide reads, in one-letter code: Small ribosomal subunit protein bS20 (87 aa).

Residues 1–28 (MANSAQARKRARQASAQRDHNMSQRSEL) form a disordered region. Residues 17-28 (QRDHNMSQRSEL) show a composition bias toward basic and acidic residues.

This sequence belongs to the bacterial ribosomal protein bS20 family.

Binds directly to 16S ribosomal RNA. This chain is Small ribosomal subunit protein bS20, found in Thiobacillus denitrificans (strain ATCC 25259 / T1).